We begin with the raw amino-acid sequence, 213 residues long: Octanoyltransferase (213 aa).

The BPL/LPL catalytic domain maps to 32-207 (ENTPDEIWLV…NILALLNNPP (176 aa)). Substrate is bound by residues 71–78 (RGGQVTYH), 138–140 (SLG), and 151–153 (GLA). The active-site Acyl-thioester intermediate is Cys-169.

It belongs to the LipB family.

The protein resides in the cytoplasm. The enzyme catalyses octanoyl-[ACP] + L-lysyl-[protein] = N(6)-octanoyl-L-lysyl-[protein] + holo-[ACP] + H(+). It participates in protein modification; protein lipoylation via endogenous pathway; protein N(6)-(lipoyl)lysine from octanoyl-[acyl-carrier-protein]: step 1/2. Its function is as follows. Catalyzes the transfer of endogenously produced octanoic acid from octanoyl-acyl-carrier-protein onto the lipoyl domains of lipoate-dependent enzymes. Lipoyl-ACP can also act as a substrate although octanoyl-ACP is likely to be the physiological substrate. In Citrobacter koseri (strain ATCC BAA-895 / CDC 4225-83 / SGSC4696), this protein is Octanoyltransferase.